The chain runs to 88 residues: Small ribosomal subunit protein bS20 (88 aa).

This sequence belongs to the bacterial ribosomal protein bS20 family.

Functionally, binds directly to 16S ribosomal RNA. This Syntrophomonas wolfei subsp. wolfei (strain DSM 2245B / Goettingen) protein is Small ribosomal subunit protein bS20.